The following is a 265-amino-acid chain: Interleukin-2 receptor subunit alpha (265 aa).

Positions 1-21 (MDSYLLMWGLLTLIMVPGCFA) are cleaved as a signal peptide. One can recognise a Sushi 1 domain in the interval 22-84 (ELCDDDPPEI…SWDNQCQCTS (63 aa)). At 22–240 (ELCDDDPPEI…ETFIFTTEYQ (219 aa)) the chain is on the extracellular side. Cystine bridges form between C24/C67, C49/C80, and C51/C82. 2 N-linked (GlcNAc...) asparagine glycosylation sites follow: N70 and N89. The span at 87–98 (TRNTTKQVTPQP) shows a compositional bias: polar residues. A disordered region spans residues 87 to 123 (TRNTTKQVTPQPEEQKERKTTEMQSPMQPVDQASLPG). Positions 123-186 (GHCREPPPWE…WTQPQLICTG (64 aa)) constitute a Sushi 2 domain. 2 disulfides stabilise this stretch: C125–C168 and C152–C184. The disordered stretch occupies residues 190-210 (TSQFPGEEKPQASPEGRPESE). Residues 195–209 (GEEKPQASPEGRPES) are compositionally biased toward basic and acidic residues. A helical transmembrane segment spans residues 241-259 (VAVAGCVFLLISVLLLSGL). Over 260–265 (TWQRRQ) the chain is Cytoplasmic.

As to quaternary structure, non-covalent dimer of an alpha and a beta subunit. IL2R exists in 3 different forms: a high affinity dimer, an intermediate affinity monomer (beta subunit), and a low affinity monomer (alpha subunit). The high and intermediate affinity forms also associate with a gamma subunit.

It is found in the membrane. Its function is as follows. Receptor for interleukin-2. The receptor is involved in the regulation of immune tolerance by controlling regulatory T cells (TREGs) activity. TREGs suppress the activation and expansion of autoreactive T-cells. The protein is Interleukin-2 receptor subunit alpha (IL2RA) of Pan troglodytes (Chimpanzee).